An 83-amino-acid polypeptide reads, in one-letter code: Large ribosomal subunit protein eL31 (83 aa).

The protein belongs to the eukaryotic ribosomal protein eL31 family.

The protein is Large ribosomal subunit protein eL31 of Methanococcus aeolicus (strain ATCC BAA-1280 / DSM 17508 / OCM 812 / Nankai-3).